A 107-amino-acid chain; its full sequence is Large ribosomal subunit protein uL24 (107 aa).

The protein belongs to the universal ribosomal protein uL24 family. Part of the 50S ribosomal subunit.

Functionally, one of two assembly initiator proteins, it binds directly to the 5'-end of the 23S rRNA, where it nucleates assembly of the 50S subunit. Its function is as follows. One of the proteins that surrounds the polypeptide exit tunnel on the outside of the subunit. The polypeptide is Large ribosomal subunit protein uL24 (Mycobacterium ulcerans (strain Agy99)).